A 1206-amino-acid polypeptide reads, in one-letter code: STE20-like serine/threonine-protein kinase (1206 aa).

S14 carries the post-translational modification Phosphoserine. Residues 34–292 (WEIIGELGDG…TSQLLQHPFV (259 aa)) form the Protein kinase domain. Residues 40-48 (LGDGAFGKV) and K63 contribute to the ATP site. The active-site Proton acceptor is the D155. Phosphothreonine is present on T183. The residue at position 189 (S189) is a Phosphoserine. Residues 308-352 (KAEVTEEVEDGKEEDDDDETESALPIPANKRASSDLSIASSEEDK) form a disordered region. Acidic residues predominate over residues 312–328 (TEEVEDGKEEDDDDETE). Residues S340, S341, S344, S347, S348, S354, and S372 each carry the phosphoserine modification. The interval 364 to 440 (SERTEHNTSG…ESQPDTEDQQ (77 aa)) is disordered. Composition is skewed to basic and acidic residues over residues 381–395 (LSEK…KTVD) and 420–429 (ENGREKKRPQ). Residues 468 to 492 (EEDRNEENQEIIENKLTQSEEIKDI) adopt a coiled-coil conformation. Disordered regions lie at residues 515–761 (DNEV…SSSD) and 773–792 (TKDS…KTLK). A compositionally biased stretch (basic and acidic residues) spans 520 to 536 (FTKEETQEKLGKDDKTH). 2 positions are modified to phosphoserine: S545 and S563. The segment covering 556 to 565 (TQKSAEQSQD) has biased composition (polar residues). Residues 584-609 (KATEGPEAHGAEEEPRSGERVEDKQL) show a composition bias toward basic and acidic residues. Residues 634-643 (EEPETDEVDQ) are compositionally biased toward acidic residues. S645, S649, and S668 each carry phosphoserine. Residues 691–702 (AEPQAPAASQAS) are compositionally biased toward low complexity. The segment covering 747–757 (TDSGTGSTVEN) has biased composition (polar residues). Phosphoserine is present on residues S776 and S778. T813 carries the post-translational modification Phosphothreonine. S817 bears the Phosphoserine mark. A coiled-coil region spans residues 825–1037 (LRRQELRELR…LKNRQTQERA (213 aa)). Positions 874–909 (DQEIENLEKQQKQTIERLEQEHTNRLRDEAKRIKGE) constitute a UVR domain. A Phosphothreonine modification is found at T1065. Residues 1077–1151 (AAQEEKRQKN…ELKEWREKLR (75 aa)) are a coiled coil. Residues 1079 to 1099 (QEEKRQKNERMAQHQKHESQM) show a composition bias toward basic and acidic residues. Disordered stretches follow at residues 1079 to 1100 (QEEK…SQMR) and 1181 to 1206 (LNPS…AWAG). Residues 1181–1200 (LNPSAQSRGCLQTSHPSSTR) show a composition bias toward polar residues.

It belongs to the protein kinase superfamily. STE Ser/Thr protein kinase family. STE20 subfamily. Proteolytically cleaved by caspase-3. Post-translationally, autophosphorylated.

The protein localises to the cytoplasm. The enzyme catalyses L-seryl-[protein] + ATP = O-phospho-L-seryl-[protein] + ADP + H(+). It carries out the reaction L-threonyl-[protein] + ATP = O-phospho-L-threonyl-[protein] + ADP + H(+). Its function is as follows. Mediates apoptosis and actin stress fiber dissolution. The sequence is that of STE20-like serine/threonine-protein kinase (Slk) from Rattus norvegicus (Rat).